Consider the following 1178-residue polypeptide: DNA-directed RNA polymerase subunit beta' (1178 aa).

Residues Cys-60, Cys-62, Cys-75, and Cys-78 each contribute to the Zn(2+) site. Positions 450, 452, and 454 each coordinate Mg(2+). Zn(2+) contacts are provided by Cys-795, Cys-869, Cys-876, and Cys-879.

This sequence belongs to the RNA polymerase beta' chain family. The RNAP catalytic core consists of 2 alpha, 1 beta, 1 beta' and 1 omega subunit. When a sigma factor is associated with the core the holoenzyme is formed, which can initiate transcription. It depends on Mg(2+) as a cofactor. Zn(2+) serves as cofactor.

The catalysed reaction is RNA(n) + a ribonucleoside 5'-triphosphate = RNA(n+1) + diphosphate. Its function is as follows. DNA-dependent RNA polymerase catalyzes the transcription of DNA into RNA using the four ribonucleoside triphosphates as substrates. This is DNA-directed RNA polymerase subunit beta' from Clostridium botulinum (strain Okra / Type B1).